A 622-amino-acid polypeptide reads, in one-letter code: Low affinity potassium transport system protein Kup (622 aa).

Helical transmembrane passes span 9–29, 49–69, 103–123, 137–157, 165–185, 213–233, 247–267, 276–296, 337–357, 363–383, 396–416, and 419–439; these read LPAITLAAIGVVYGDIGTSPL, VFGFLSLIFWLLIFVVSIKYL, VIMGLIGGSFFYGEVVITPAI, PQLDTWIVPLSIIVLTLLFMI, VGKLFAPIMLTWFLILAGLGL, VSFIALGAVVLSITGGEALYA, WFTVVLPSLTLNYFGQGALLL, PFFLLAPDWALIPLLIIAALA, IYIPFVNWMLYVAVVIVIVSF, LAAAYGIAVTGTMVLTSILST, FVALILIAFLCVDIPLFTANL, and LLSGGWLPLSLGTVMFIVMTT.

It belongs to the HAK/KUP transporter (TC 2.A.72) family.

It localises to the cell inner membrane. It carries out the reaction K(+)(in) + H(+)(in) = K(+)(out) + H(+)(out). In terms of biological role, responsible for the low-affinity transport of potassium into the cell. Likely operates as a K(+):H(+) symporter. In Escherichia coli O157:H7 (strain EC4115 / EHEC), this protein is Low affinity potassium transport system protein Kup.